Here is a 908-residue protein sequence, read N- to C-terminus: Protein translocase subunit SecA (908 aa).

Residues glutamine 90, 108 to 112 (GEGKT), and aspartate 503 each bind ATP. Positions 846–864 (AAAAEAPVAPAPQPAAAAP) are enriched in low complexity. The segment at 846–884 (AAAAEAPVAPAPQPAAAAPQPTPELVGAEAGEPDPAAWG) is disordered. Cysteine 892, cysteine 894, cysteine 903, and histidine 904 together coordinate Zn(2+).

The protein belongs to the SecA family. As to quaternary structure, monomer and homodimer. Part of the essential Sec protein translocation apparatus which comprises SecA, SecYEG and auxiliary proteins SecDF-YajC and YidC. Zn(2+) is required as a cofactor.

The protein localises to the cell inner membrane. The protein resides in the cytoplasm. The enzyme catalyses ATP + H2O + cellular proteinSide 1 = ADP + phosphate + cellular proteinSide 2.. Functionally, part of the Sec protein translocase complex. Interacts with the SecYEG preprotein conducting channel. Has a central role in coupling the hydrolysis of ATP to the transfer of proteins into and across the cell membrane, serving both as a receptor for the preprotein-SecB complex and as an ATP-driven molecular motor driving the stepwise translocation of polypeptide chains across the membrane. The chain is Protein translocase subunit SecA from Cereibacter sphaeroides (strain KD131 / KCTC 12085) (Rhodobacter sphaeroides).